The chain runs to 73 residues: Translation initiation factor IF-1 (73 aa).

The region spanning 1–73 is the S1-like domain; sequence MAKKDGAIEV…SRGRIVYRYK (73 aa).

It belongs to the IF-1 family. In terms of assembly, component of the 30S ribosomal translation pre-initiation complex which assembles on the 30S ribosome in the order IF-2 and IF-3, IF-1 and N-formylmethionyl-tRNA(fMet); mRNA recruitment can occur at any time during PIC assembly.

The protein localises to the cytoplasm. In terms of biological role, one of the essential components for the initiation of protein synthesis. Stabilizes the binding of IF-2 and IF-3 on the 30S subunit to which N-formylmethionyl-tRNA(fMet) subsequently binds. Helps modulate mRNA selection, yielding the 30S pre-initiation complex (PIC). Upon addition of the 50S ribosomal subunit IF-1, IF-2 and IF-3 are released leaving the mature 70S translation initiation complex. The chain is Translation initiation factor IF-1 from Mycolicibacterium smegmatis (strain ATCC 700084 / mc(2)155) (Mycobacterium smegmatis).